Consider the following 222-residue polypeptide: UPF0758 protein HSM_0009 (222 aa).

The MPN domain occupies 99–222; sequence QEFTSPDTVR…YFSFAEQGWI (124 aa). 3 residues coordinate Zn(2+): histidine 171, histidine 173, and aspartate 184. A JAMM motif motif is present at residues 171–184; that stretch reads HNHPSGVSTPSMAD.

Belongs to the UPF0758 family.

This is UPF0758 protein HSM_0009 from Histophilus somni (strain 2336) (Haemophilus somnus).